A 353-amino-acid polypeptide reads, in one-letter code: Small ribosomal subunit protein uS2 (353 aa).

The segment at 256–353 is disordered; it reads DTDEQSSAAN…TPAESTDEQA (98 aa). Composition is skewed to low complexity over residues 263–311 and 321–339; these read AANT…AEAP and ESATPAEAEVEAESATPAE. Residues 340-353 show a composition bias toward acidic residues; it reads AEAETPAESTDEQA.

It belongs to the universal ribosomal protein uS2 family.

This Beutenbergia cavernae (strain ATCC BAA-8 / DSM 12333 / CCUG 43141 / JCM 11478 / NBRC 16432 / NCIMB 13614 / HKI 0122) protein is Small ribosomal subunit protein uS2.